The sequence spans 509 residues: Otolin-1 (509 aa).

Residues 1–25 (MPSLRLLAILTTLLAVVLMATQSSA) form the signal peptide. The interval 23-96 (SSATRTTRRP…AYSLSPTDST (74 aa)) is disordered. Positions 42-54 (RGGGTGGGGGGGD) are enriched in gly residues. A compositionally biased stretch (polar residues) spans 62–75 (RQTTTTMSPSSSLG). The N-linked (GlcNAc...) asparagine glycan is linked to N121. Residues 193–244 (GDKGDQGDTGMPGAPGILGKEGQKGDLGPKGEKGETGLPGLKGDLGERGKPG) form the Collagen-like 1 domain. A disordered region spans residues 202–372 (GMPGAPGILG…GPKGPQGETA (171 aa)). Over residues 213 to 227 (EGQKGDLGPKGEKGE) the composition is skewed to basic and acidic residues. N-linked (GlcNAc...) asparagine glycans are attached at residues N246 and N311. In terms of domain architecture, Collagen-like 2 spans 285–329 (GEKGEKGEAGLPGPPGPRGSVGPPGVNGSNGLPGPVGLRGQLGSP). Residues 302–322 (RGSVGPPGVNGSNGLPGPVGL) show a composition bias toward low complexity. Residues 327–342 (GSPGGKGEAGGRGPPG) show a composition bias toward gly residues. In terms of domain architecture, C1q spans 372 to 509 (AEQIRSAFSV…GFLLYADPKA (138 aa)). The N-linked (GlcNAc...) asparagine glycan is linked to N417.

Belongs to the OTOL1 family. As to quaternary structure, homooligomer; disulfide-linked; probably forms homotrimers. Interacts with otomp.

It localises to the secreted. It is found in the extracellular space. The protein resides in the extracellular matrix. In terms of biological role, collagen-like protein, which provides an organic scaffold for otoliths onto the sensory epithelium of the inner ear. Acts as a scaffold for biomineralization by sequestering calcium. The sequence is that of Otolin-1 (Otol1) from Oncorhynchus mykiss (Rainbow trout).